An 86-amino-acid polypeptide reads, in one-letter code: Large ribosomal subunit protein uL23 (86 aa).

Belongs to the universal ribosomal protein uL23 family. In terms of assembly, part of the 50S ribosomal subunit. Contacts protein L29.

Binds to 23S rRNA. One of the proteins that surrounds the polypeptide exit tunnel on the outside of the ribosome. The chain is Large ribosomal subunit protein uL23 from Aeropyrum pernix (strain ATCC 700893 / DSM 11879 / JCM 9820 / NBRC 100138 / K1).